Reading from the N-terminus, the 63-residue chain is ATP synthase membrane subunit K, mitochondrial (63 aa).

A helical membrane pass occupies residues 15-37 (TMRGRANVAKATWASLGLVYVLV).

F-type ATPases have 2 components, CF(1) - the catalytic core - and CF(0) - the membrane proton channel. CF(1) has five subunits: alpha(3), beta(3), gamma(1), delta(1), epsilon(1). CF(0) has three main subunits: a, b and c. The ATP synthase complex/complex V exists as a monomeric and a dimeric supercomplex that helps shape mitochondrial cristae to optimize proton flow.

It localises to the mitochondrion membrane. Functionally, mitochondrial membrane ATP synthase (F(1)F(0) ATP synthase or Complex V) produces ATP from ADP in the presence of a proton gradient across the membrane which is generated by electron transport complexes of the respiratory chain. F-type ATPases consist of two structural domains, F(1) - containing the extramembraneous catalytic core and F(0) - containing the membrane proton channel, linked together by a central stalk and a peripheral stalk. During catalysis, ATP synthesis in the catalytic domain of F(1) is coupled via a rotary mechanism of the central stalk subunits to proton translocation. ATP5MK is a minor subunit of the mitochondrial membrane ATP synthase required for dimerization of the ATP synthase complex and as such regulates ATP synthesis in the mitochondria. This Drosophila melanogaster (Fruit fly) protein is ATP synthase membrane subunit K, mitochondrial.